Reading from the N-terminus, the 567-residue chain is MSSVVSDQMDIESSSAFSPAEPVVDGAFVSKHNLSAEAYQGFKECADSLLSGKIAQNEQLPFIQRTLQICENVILNFEDEKQHLMSDVLLVWAMKQQKLSIATLHTQQLHYKELDLINLQFEYFGELLQQTLSGLDYLKQYYPNVGFEEVHSKVRNLTHYFLYYSIIVSRQPPSVIVKCGEAENHRRSRFWFNTEIRILGGSAFGIDTNNENSNVNCYLITDETAKQLLNNAYLDIFESEEFCIEPNTSTFQKKDARGIKAKFDDMKVAKKVALRRDSVATKRYCLCYNIQLQTNCGIELVGKKVSLPFAVLVGPKADVEAKLFLERSFADLVRHPLSDIPTHVSCAEMADALEMKFQAIIETPQKNTDGPSVVQPRKFNMQTKQHLVMRMKPNNQGFLPLDNFMKLPVAEEFQHKKSASAEGDWKLVPFYDWFFKLAEITNKYLYSMWYDGLVYGFCSKEDAENILRCIPRSVLLVRFSDIEYGKIKISVKNRNGEIRHHWYEHADLNARSLNSELLSNHKFSDVDLIYPDIDLEVALGGRNKPRIRLPRNLAPDEIYFDNQGAAT.

One can recognise an SH2 domain in the interval 449–548 (WYDGLVYGFC…LGGRNKPRIR (100 aa)).

Belongs to the transcription factor STAT family. May interact with sodium-dependent transporter snf-12; the interaction is probably direct.

The protein localises to the cytoplasm. It localises to the nucleus. Its subcellular location is the vesicle. Its function is as follows. Carries out a dual function: signal transduction and activation of transcription. Required, in concert with transcription factor elt-3, for up-regulation of the vacuolar H(+)-ATPase and acceleration of lysosome maturation at molt. As part of the innate immune response to molting and injury of the adult epidermis, positively regulates the expression of epidermal antimicrobial peptides, such as nlp-29. Through positively modulating the expression of epidermal antimicrobial peptides, such as nlp-29, plays a role in resistance to fungal infection and in the response to physical wounding and phorbol ester PMA treatment. Functions cell autonomously in the epidermis, in concert with sodium-dependent transporter snf-12, probably acting at vesicular membranes, downstream of a p38 MAPK/pmk-1 pathway. The chain is Signal transducer and activator of transcription b from Caenorhabditis elegans.